Reading from the N-terminus, the 197-residue chain is Nucleoid occlusion factor SlmA (197 aa).

One can recognise an HTH tetR-type domain in the interval 7 to 67 (INRREHILQC…GLIDFIEESL (61 aa)). Residues 30 to 49 (TTAKLAAEVGVSEAALYRHF) constitute a DNA-binding region (H-T-H motif).

The protein belongs to the nucleoid occlusion factor SlmA family. As to quaternary structure, homodimer. Interacts with FtsZ.

The protein resides in the cytoplasm. It is found in the nucleoid. In terms of biological role, required for nucleoid occlusion (NO) phenomenon, which prevents Z-ring formation and cell division over the nucleoid. Acts as a DNA-associated cell division inhibitor that binds simultaneously chromosomal DNA and FtsZ, and disrupts the assembly of FtsZ polymers. SlmA-DNA-binding sequences (SBS) are dispersed on non-Ter regions of the chromosome, preventing FtsZ polymerization at these regions. The protein is Nucleoid occlusion factor SlmA of Shewanella woodyi (strain ATCC 51908 / MS32).